Consider the following 360-residue polypeptide: Phospho-N-acetylmuramoyl-pentapeptide-transferase (360 aa).

Transmembrane regions (helical) follow at residues 21-41 (YITVRAILTLLTALFISLWIG), 73-93 (TMGGVMILFSIGVSTLLWANL), 94-114 (ANPYIWVCLFVLFGYGAIGFV), 132-152 (WKYFWMSVVALVAILWLYWLG), 168-188 (IMPQLGLFYIVLSYFVIVGTG), 199-219 (GLAIMPTALVAGAFALIAWAT), 239-259 (VVVFCTAIVGASLGFLWFNTY), 263-283 (VFMGDVGSLALGGALGVVAIL), 288-308 (FLLVIMGGVFVVEALSVILQV), and 338-358 (VIIRFWIISLMLVLMGLVTLK).

The protein belongs to the glycosyltransferase 4 family. MraY subfamily. It depends on Mg(2+) as a cofactor.

The protein localises to the cell inner membrane. The enzyme catalyses UDP-N-acetyl-alpha-D-muramoyl-L-alanyl-gamma-D-glutamyl-meso-2,6-diaminopimeloyl-D-alanyl-D-alanine + di-trans,octa-cis-undecaprenyl phosphate = di-trans,octa-cis-undecaprenyl diphospho-N-acetyl-alpha-D-muramoyl-L-alanyl-D-glutamyl-meso-2,6-diaminopimeloyl-D-alanyl-D-alanine + UMP. Its pathway is cell wall biogenesis; peptidoglycan biosynthesis. Its function is as follows. Catalyzes the initial step of the lipid cycle reactions in the biosynthesis of the cell wall peptidoglycan: transfers peptidoglycan precursor phospho-MurNAc-pentapeptide from UDP-MurNAc-pentapeptide onto the lipid carrier undecaprenyl phosphate, yielding undecaprenyl-pyrophosphoryl-MurNAc-pentapeptide, known as lipid I. The polypeptide is Phospho-N-acetylmuramoyl-pentapeptide-transferase (Haemophilus influenzae (strain PittEE)).